We begin with the raw amino-acid sequence, 238 residues long: uncharacterized protein (238 aa).

Belongs to the mimivirus L74/L77/R857 family.

This is an uncharacterized protein from Acanthamoeba polyphaga mimivirus (APMV).